The sequence spans 1249 residues: Protein STU1 (1249 aa).

2 stretches are compositionally biased toward low complexity: residues 138 to 156 (LNSS…TATK) and 555 to 574 (AASP…PSSA). Disordered regions lie at residues 138-161 (LNSS…KPHE), 545-619 (KQLE…NPVF), 644-718 (HVET…LGLG), 755-846 (AEHE…NGNI), 860-891 (AFQT…RPEA), and 1084-1118 (HPAP…EKRT). Residues 581–600 (KKMDLKAMLAERRRAVKEAG) are compositionally biased toward basic and acidic residues. Low complexity-rich tracts occupy residues 647-667 (TSSP…RIRP) and 708-718 (SPSLSPSLGLG). Residues 755-774 (AEHEVDELTLKEGQKTRDDG) show a composition bias toward basic and acidic residues. 3 stretches are compositionally biased toward polar residues: residues 809 to 822 (QQGN…SGRV), 831 to 844 (ATGT…SRNG), and 863 to 878 (TPLN…SSAI). A compositionally biased stretch (low complexity) spans 1089–1111 (SSSADNSDPMTSALSQLSLSSSK).

This sequence belongs to the CLASP family. In terms of assembly, interacts with microtubules.

The protein resides in the cytoplasm. The protein localises to the cytoskeleton. Its subcellular location is the nucleus. It is found in the spindle. In terms of biological role, microtubule binding protein that promotes the stabilization of dynamic microtubules. Required for mitotic spindle formation. The protein is Protein STU1 (STU1) of Cryptococcus neoformans var. neoformans serotype D (strain JEC21 / ATCC MYA-565) (Filobasidiella neoformans).